The sequence spans 212 residues: Phosphatidylserine decarboxylase proenzyme (212 aa).

Catalysis depends on Ser182, which acts as the Schiff-base intermediate with substrate; via pyruvic acid. The residue at position 182 (Ser182) is a Pyruvic acid (Ser); by autocatalysis.

It belongs to the phosphatidylserine decarboxylase family. PSD-A subfamily. As to quaternary structure, heterodimer of a large membrane-associated beta subunit and a small pyruvoyl-containing alpha subunit. It depends on pyruvate as a cofactor. In terms of processing, is synthesized initially as an inactive proenzyme. Formation of the active enzyme involves a self-maturation process in which the active site pyruvoyl group is generated from an internal serine residue via an autocatalytic post-translational modification. Two non-identical subunits are generated from the proenzyme in this reaction, and the pyruvate is formed at the N-terminus of the alpha chain, which is derived from the carboxyl end of the proenzyme. The post-translation cleavage follows an unusual pathway, termed non-hydrolytic serinolysis, in which the side chain hydroxyl group of the serine supplies its oxygen atom to form the C-terminus of the beta chain, while the remainder of the serine residue undergoes an oxidative deamination to produce ammonia and the pyruvoyl prosthetic group on the alpha chain.

The protein localises to the cell membrane. The catalysed reaction is a 1,2-diacyl-sn-glycero-3-phospho-L-serine + H(+) = a 1,2-diacyl-sn-glycero-3-phosphoethanolamine + CO2. It participates in phospholipid metabolism; phosphatidylethanolamine biosynthesis; phosphatidylethanolamine from CDP-diacylglycerol: step 2/2. In terms of biological role, catalyzes the formation of phosphatidylethanolamine (PtdEtn) from phosphatidylserine (PtdSer). The chain is Phosphatidylserine decarboxylase proenzyme from Chlorobium limicola (strain DSM 245 / NBRC 103803 / 6330).